Reading from the N-terminus, the 463-residue chain is L-seryl-tRNA(Sec) selenium transferase (463 aa).

K295 is modified (N6-(pyridoxal phosphate)lysine).

This sequence belongs to the SelA family. Homodecamer; pentamer of dimers. Binds only one seryl-tRNA(Sec) per dimer. The cofactor is pyridoxal 5'-phosphate.

It is found in the cytoplasm. The enzyme catalyses L-seryl-tRNA(Sec) + selenophosphate + H(+) = L-selenocysteinyl-tRNA(Sec) + phosphate. It participates in aminoacyl-tRNA biosynthesis; selenocysteinyl-tRNA(Sec) biosynthesis; selenocysteinyl-tRNA(Sec) from L-seryl-tRNA(Sec) (bacterial route): step 1/1. Functionally, converts seryl-tRNA(Sec) to selenocysteinyl-tRNA(Sec) required for selenoprotein biosynthesis. The sequence is that of L-seryl-tRNA(Sec) selenium transferase from Serratia proteamaculans (strain 568).